Here is a 1115-residue protein sequence, read N- to C-terminus: Eukaryotic translation initiation factor 2-alpha kinase 3 (1115 aa).

The signal sequence occupies residues 1-29; it reads MERATGPGSLARTLLLPLLLGLVAGTVTA. The Extracellular portion of the chain corresponds to 30–514; that stretch reads RRTSDLLAPT…PNYKNIRKKD (485 aa). The interval 74–101 is disordered; it reads SEALPAAAGEQEAREPEPEPEEEPDIRP. An N-linked (GlcNAc...) asparagine glycan is attached at Asn-259. The chain crosses the membrane as a helical span at residues 515–535; sequence PVLLLHWWKEIVGTIVFCIVA. Topologically, residues 536–1115 are cytoplasmic; that stretch reads TTFIVRRLFH…SSPHSPLPSN (580 aa). The 484-residue stretch at 593–1076 folds into the Protein kinase domain; that stretch reads FEPIQCMGRG…AASIIENAIF (484 aa). An ATP-binding site is contributed by 599–607; it reads MGRGGFGVV. A Phosphotyrosine; by autocatalysis modification is found at Tyr-619. Residue Lys-622 participates in ATP binding. Residues 647-887 form an insert loop region; it reads EHPGIVRYFN…SPKVYLYIQM (241 aa). Ser-715 bears the Phosphoserine mark. The residue at position 802 (Thr-802) is a Phosphothreonine. Disordered regions lie at residues 807-832 and 841-860; these read VFED…VGNH and RHSG…SRPT. The segment covering 845–860 has biased composition (polar residues); that stretch reads SKSSEPTVSVSPSRPT. The Proton acceptor role is filled by Asp-936. Thr-981 is subject to Phosphothreonine. The disordered stretch occupies residues 1087-1115; sequence LRQRSRSMSSPGAKHSRHSSSPHSPLPSN. Position 1093 is a phosphoserine (Ser-1093).

Belongs to the protein kinase superfamily. Ser/Thr protein kinase family. GCN2 subfamily. Forms dimers with HSPA5/BIP in resting cells. Homotetramerizes in response to endoplasmic reticulum (ER) stress, leading to its activation. Interacts with HSP90B1/GRP94. Interacts with DNAJC3; inhibiting EIF2AK3/PERK activity. Interacts with ATAD3A; ATAD3A and EIF2S1/eIF-2-alpha occupy a common binding site within the cytoplasmic loop of EIF2AK3/PERK, leading to prevent EIF2AK3/PERK association with its substrate EIF2S1/eIF-2-alpha. Interacts with MFN2. Interacts with TMEM33. Interacts with PDIA6. Interacts with LACC1. In terms of processing, oligomerization of the N-terminal ER luminal domain by ER stress promotes EIF2AK3/PERK trans-autophosphorylation of the C-terminal cytoplasmic kinase domain at multiple residues including Thr-981 on the kinase activation loop. Autophosphorylated at Tyr-619 following endoplasmic reticulum stress, leading to activate its activity. Dephosphorylated at Tyr-619 by PTPN1/PTP1B, leading to inactivate its enzyme activity. Phosphorylation at Thr-802 by AKT (AKT1, AKT2 and/or AKT3) inactivates EIF2AK3/PERK. ADP-ribosylated by PARP16 upon ER stress, which increases kinase activity.

The protein localises to the endoplasmic reticulum membrane. The catalysed reaction is L-seryl-[protein] + ATP = O-phospho-L-seryl-[protein] + ADP + H(+). It catalyses the reaction L-threonyl-[protein] + ATP = O-phospho-L-threonyl-[protein] + ADP + H(+). The enzyme catalyses L-tyrosyl-[protein] + ATP = O-phospho-L-tyrosyl-[protein] + ADP + H(+). Its activity is regulated as follows. Inhibited by HSPA5/BIP in absence of stress. Perturbation in protein folding in the endoplasmic reticulum (ER) promotes reversible dissociation from HSPA5/BIP and oligomerization, resulting in trans-autophosphorylation and kinase activity induction. Inactivated following phosphorylation at Thr-802 by AKT (AKT1, AKT2 and/or AKT3). Inhibited by ATAD3A at mitochondria-endoplasmic reticulum contact sites, providing a safe haven for mitochondrial protein translation during ER stress. Functionally, metabolic-stress sensing protein kinase that phosphorylates the alpha subunit of eukaryotic translation initiation factor 2 (EIF2S1/eIF-2-alpha) in response to various stress, such as unfolded protein response (UPR). Key effector of the integrated stress response (ISR) to unfolded proteins: EIF2AK3/PERK specifically recognizes and binds misfolded proteins, leading to its activation and EIF2S1/eIF-2-alpha phosphorylation. EIF2S1/eIF-2-alpha phosphorylation in response to stress converts EIF2S1/eIF-2-alpha in a global protein synthesis inhibitor, leading to a global attenuation of cap-dependent translation, while concomitantly initiating the preferential translation of ISR-specific mRNAs, such as the transcriptional activators ATF4 and QRICH1, and hence allowing ATF4- and QRICH1-mediated reprogramming. The EIF2AK3/PERK-mediated unfolded protein response increases mitochondrial oxidative phosphorylation by promoting ATF4-mediated expression of COX7A2L/SCAF1, thereby increasing formation of respiratory chain supercomplexes. In contrast to most subcellular compartments, mitochondria are protected from the EIF2AK3/PERK-mediated unfolded protein response due to EIF2AK3/PERK inhibition by ATAD3A at mitochondria-endoplasmic reticulum contact sites. In addition to EIF2S1/eIF-2-alpha, also phosphorylates NFE2L2/NRF2 in response to stress, promoting release of NFE2L2/NRF2 from the BCR(KEAP1) complex, leading to nuclear accumulation and activation of NFE2L2/NRF2. Serves as a critical effector of unfolded protein response (UPR)-induced G1 growth arrest due to the loss of cyclin-D1 (CCND1). Involved in control of mitochondrial morphology and function. The chain is Eukaryotic translation initiation factor 2-alpha kinase 3 from Bos taurus (Bovine).